The primary structure comprises 98 residues: NADH-ubiquinone oxidoreductase chain 4L (98 aa).

The next 3 membrane-spanning stretches (helical) occupy residues 1–21 (MSSYLTIIISFFYLGILGILL), 24–44 (LHLLSILLCFELLLISLFIWI), and 61–81 (LILLTLSACEASAGLSLMVAL).

The protein belongs to the complex I subunit 4L family.

Its subcellular location is the mitochondrion membrane. The enzyme catalyses a ubiquinone + NADH + 5 H(+)(in) = a ubiquinol + NAD(+) + 4 H(+)(out). Core subunit of the mitochondrial membrane respiratory chain NADH dehydrogenase (Complex I) that is believed to belong to the minimal assembly required for catalysis. Complex I functions in the transfer of electrons from NADH to the respiratory chain. The immediate electron acceptor for the enzyme is believed to be ubiquinone. This chain is NADH-ubiquinone oxidoreductase chain 4L (ND4L), found in Pisaster ochraceus (Ochre sea star).